The primary structure comprises 337 residues: GTP 3',8-cyclase (337 aa).

Positions 17–243 (PFQRQYYYLR…HKSHTDGPAK (227 aa)) constitute a Radical SAM core domain. Arg26 is a GTP binding site. Positions 33 and 37 each coordinate [4Fe-4S] cluster. Residue Tyr39 coordinates S-adenosyl-L-methionine. Residue Cys40 participates in [4Fe-4S] cluster binding. Arg76 is a GTP binding site. Residue Gly80 coordinates S-adenosyl-L-methionine. Residue Thr107 coordinates GTP. Ser131 provides a ligand contact to S-adenosyl-L-methionine. Lys168 is a binding site for GTP. Met202 contacts S-adenosyl-L-methionine. 2 residues coordinate [4Fe-4S] cluster: Cys265 and Cys268. GTP is bound at residue 270-272 (RLR). Cys282 serves as a coordination point for [4Fe-4S] cluster.

This sequence belongs to the radical SAM superfamily. MoaA family. Monomer and homodimer. [4Fe-4S] cluster serves as cofactor.

It carries out the reaction GTP + AH2 + S-adenosyl-L-methionine = (8S)-3',8-cyclo-7,8-dihydroguanosine 5'-triphosphate + 5'-deoxyadenosine + L-methionine + A + H(+). The protein operates within cofactor biosynthesis; molybdopterin biosynthesis. Its function is as follows. Catalyzes the cyclization of GTP to (8S)-3',8-cyclo-7,8-dihydroguanosine 5'-triphosphate. In Haemophilus influenzae (strain PittGG), this protein is GTP 3',8-cyclase.